The chain runs to 261 residues: Spermatogenesis-associated protein 46 (261 aa).

The interval 140–159 is disordered; the sequence is SSSSSPENTCPREATKKSRH.

Testis-specific.

The protein resides in the nucleus membrane. Its function is as follows. Plays a role in spermiogenesis and fertilization. The polypeptide is Spermatogenesis-associated protein 46 (Homo sapiens (Human)).